The sequence spans 353 residues: UDP-N-acetylglucosamine--N-acetylmuramyl-(pentapeptide) pyrophosphoryl-undecaprenol N-acetylglucosamine transferase (353 aa).

Residues 10–12, Asn124, Ser183, and Gln283 each bind UDP-N-acetyl-alpha-D-glucosamine; that span reads TGG.

This sequence belongs to the glycosyltransferase 28 family. MurG subfamily.

Its subcellular location is the cell inner membrane. The catalysed reaction is di-trans,octa-cis-undecaprenyl diphospho-N-acetyl-alpha-D-muramoyl-L-alanyl-D-glutamyl-meso-2,6-diaminopimeloyl-D-alanyl-D-alanine + UDP-N-acetyl-alpha-D-glucosamine = di-trans,octa-cis-undecaprenyl diphospho-[N-acetyl-alpha-D-glucosaminyl-(1-&gt;4)]-N-acetyl-alpha-D-muramoyl-L-alanyl-D-glutamyl-meso-2,6-diaminopimeloyl-D-alanyl-D-alanine + UDP + H(+). The protein operates within cell wall biogenesis; peptidoglycan biosynthesis. Cell wall formation. Catalyzes the transfer of a GlcNAc subunit on undecaprenyl-pyrophosphoryl-MurNAc-pentapeptide (lipid intermediate I) to form undecaprenyl-pyrophosphoryl-MurNAc-(pentapeptide)GlcNAc (lipid intermediate II). This is UDP-N-acetylglucosamine--N-acetylmuramyl-(pentapeptide) pyrophosphoryl-undecaprenol N-acetylglucosamine transferase from Helicobacter pylori (strain Shi470).